A 133-amino-acid chain; its full sequence is Large ribosomal subunit protein uL15 (133 aa).

Positions 1-58 are disordered; it reads MALQNLTPAPGSTHATKRLGRGQGSGNGKTAGKGNKGQRARKGYNEKRGFEGGQQPLQ. Positions 21–35 are enriched in gly residues; the sequence is RGQGSGNGKTAGKGN.

The protein belongs to the universal ribosomal protein uL15 family. Part of the 50S ribosomal subunit.

Functionally, binds to the 23S rRNA. The sequence is that of Large ribosomal subunit protein uL15 from Campylobacter curvus (strain 525.92).